The chain runs to 257 residues: MLRAAWRALSSVRVQAVTQAPVPALRARSSASLPSARCGLQTPSLLNAARAYAVQKPVQAKQDDEPASSTFIKEYKNIIPNMEKVDDVVKRILSLEMASRKEKLKIKREQLMNKIAENPEDYRTLEARIVALTVKIRNYEEHMQKHRKDKVHKRHLLMSIDQRKKFLRLLRQTNYDVFEKTCKELGVEYALPPLHFQRVHRRFLAKKALCIQVFQEVQKLKKQRMALKAAAAAAKKEKRERVPENPSNALPEKTKEN.

The N-terminal 57 residues, M1–P57, are a transit peptide targeting the mitochondrion. The segment at K228–N257 is disordered. Over residues A234–P243 the composition is skewed to basic and acidic residues.

It belongs to the universal ribosomal protein uS15 family. Component of the mitochondrial ribosome small subunit (28S) which comprises a 12S rRNA and about 30 distinct proteins. Interacts with METTL17.

The protein resides in the mitochondrion matrix. This Rattus norvegicus (Rat) protein is Small ribosomal subunit protein uS15m (Mrps15).